A 235-amino-acid polypeptide reads, in one-letter code: Protein YIP4 (235 aa).

Transmembrane regions (helical) follow at residues 89-109 (ISANCDLWAPLAFIILYSLFV), 114-134 (SLFSSLFVSSWFILLVMALHL), 145-165 (LISYISISGYCLFPQVLNALV), 186-206 (VLSLVKLVVMALCLMWSVAAV), and 215-235 (IIEIYPLALCLFGMAWLSTIL).

Belongs to the YIP1 family. Interacts with TVP18, TVP23, YIP1 and YIP5. Interacts with SEC4, YPT1, YPT6, YPT7, YPT10, YPT11, YPT31, YPT32 and YPT52; These proteins are all Rab GTPases.

The protein resides in the golgi apparatus membrane. Its function is as follows. May be involved in proper membrane localization of Rab GTPases. The polypeptide is Protein YIP4 (YIP4) (Saccharomyces cerevisiae (strain ATCC 204508 / S288c) (Baker's yeast)).